Reading from the N-terminus, the 257-residue chain is Deoxyribose-phosphate aldolase (257 aa).

The Proton donor/acceptor role is filled by D102. Residue K166 is the Schiff-base intermediate with acetaldehyde of the active site. K198 functions as the Proton donor/acceptor in the catalytic mechanism.

Belongs to the DeoC/FbaB aldolase family. DeoC type 2 subfamily.

Its subcellular location is the cytoplasm. It catalyses the reaction 2-deoxy-D-ribose 5-phosphate = D-glyceraldehyde 3-phosphate + acetaldehyde. It participates in carbohydrate degradation; 2-deoxy-D-ribose 1-phosphate degradation; D-glyceraldehyde 3-phosphate and acetaldehyde from 2-deoxy-alpha-D-ribose 1-phosphate: step 2/2. In terms of biological role, catalyzes a reversible aldol reaction between acetaldehyde and D-glyceraldehyde 3-phosphate to generate 2-deoxy-D-ribose 5-phosphate. This chain is Deoxyribose-phosphate aldolase, found in Shewanella woodyi (strain ATCC 51908 / MS32).